The following is a 320-amino-acid chain: MRQTKTGILLANLGTPDSPTPEAVKRYLKQFLSDRRVVDTSRLLWWPLLRGVILPLRSPRVAKLYASVWMEGGSPLMVYSRQQQQALAQRLPETPVALGMSYGSPSLESAVDELLAEHVDHIVVLPLYPQFSCSTVGAVWDELARILARKRSIPGISFIRDYADNHDYINALANSVRASFAKHGEPDLLLLSYHGIPQRYADEGDDYPQRCRTTTRELASALGMAPEKVMMTFQSRFGREPWLMPYTDETLKMLGEKGVGHIQVMCPGFAADCLETLEEIAEQNREVFLGAGGKKYEYIPALNATPEHIEMMANLVAAYR.

Fe cation-binding residues include His-194 and Glu-275.

This sequence belongs to the ferrochelatase family. Monomer.

The protein localises to the cytoplasm. The catalysed reaction is heme b + 2 H(+) = protoporphyrin IX + Fe(2+). Its pathway is porphyrin-containing compound metabolism; protoheme biosynthesis; protoheme from protoporphyrin-IX: step 1/1. In terms of biological role, catalyzes the ferrous insertion into protoporphyrin IX. This Shigella dysenteriae serotype 1 (strain Sd197) protein is Ferrochelatase.